The chain runs to 353 residues: Farnesyl pyrophosphate synthase (353 aa).

Isopentenyl diphosphate is bound by residues K57, R60, and Q96. Position 57 is an N6-(2-hydroxyisobutyryl)lysine; alternate (K57). An N6-acetyllysine; alternate modification is found at K57. 2 residues coordinate Mg(2+): D103 and D107. Residue R112 coordinates dimethylallyl diphosphate. Residue R113 participates in isopentenyl diphosphate binding. Dimethylallyl diphosphate-binding residues include K200, T201, Q240, K257, and K266.

The protein belongs to the FPP/GGPP synthase family. In terms of assembly, homodimer. Interacts with RSAD2. Interacts with bovine leukemia virus (BLV) protein G4. Requires Mg(2+) as cofactor.

Its subcellular location is the cytoplasm. It carries out the reaction isopentenyl diphosphate + dimethylallyl diphosphate = (2E)-geranyl diphosphate + diphosphate. It catalyses the reaction isopentenyl diphosphate + (2E)-geranyl diphosphate = (2E,6E)-farnesyl diphosphate + diphosphate. It functions in the pathway isoprenoid biosynthesis; farnesyl diphosphate biosynthesis; farnesyl diphosphate from geranyl diphosphate and isopentenyl diphosphate: step 1/1. The protein operates within isoprenoid biosynthesis; geranyl diphosphate biosynthesis; geranyl diphosphate from dimethylallyl diphosphate and isopentenyl diphosphate: step 1/1. With respect to regulation, inactivated by interferon-induced RSAD2. This inactivation may result of disruption of lipid rafts at the plasma membrane, and thus have an antiviral effect since many enveloped viruses need lipid rafts to bud efficiently out of the cell. Key enzyme in isoprenoid biosynthesis which catalyzes the formation of farnesyl diphosphate (FPP), a precursor for several classes of essential metabolites including sterols, dolichols, carotenoids, and ubiquinones. FPP also serves as substrate for protein farnesylation and geranylgeranylation. Catalyzes the sequential condensation of isopentenyl pyrophosphate with the allylic pyrophosphates, dimethylallyl pyrophosphate, and then with the resultant geranylpyrophosphate to the ultimate product farnesyl pyrophosphate. The polypeptide is Farnesyl pyrophosphate synthase (FDPS) (Bos taurus (Bovine)).